The sequence spans 101 residues: Small ribosomal subunit protein uS14 (101 aa).

Belongs to the universal ribosomal protein uS14 family. In terms of assembly, part of the 30S ribosomal subunit. Contacts proteins S3 and S10.

Binds 16S rRNA, required for the assembly of 30S particles and may also be responsible for determining the conformation of the 16S rRNA at the A site. This is Small ribosomal subunit protein uS14 from Ruegeria pomeroyi (strain ATCC 700808 / DSM 15171 / DSS-3) (Silicibacter pomeroyi).